The chain runs to 338 residues: Solute carrier family 35 member G6 (338 aa).

Positions 1–25 (MAGSHPYLNPPDSTHPSPPSAPPSL) are disordered. 9 helical membrane-spanning segments follow: residues 40-60 (LLVA…LSHM), 67-87 (LPSL…ALLL), 105-125 (YFYA…VQVV), 160-180 (CGLL…LWTL), 190-210 (ALGY…LLVY), 221-241 (TVAF…LFVL), 255-275 (CVGA…YAVT), 281-301 (LVCA…YYML), and 310-330 (IVGA…NLSC). In terms of domain architecture, EamA 1 spans 49–174 (LPAGFVGPLS…SILGLIIIVG (126 aa)). The EamA 2 domain occupies 272 to 325 (YAVTKAHPALVCAVLHSEVVVALILQYYMLHETVAPSDIVGAGVVLGSIAIITA).

The protein belongs to the SLC35G solute transporter family. Expressed in placenta and testis.

It localises to the membrane. In Homo sapiens (Human), this protein is Solute carrier family 35 member G6 (SLC35G6).